Here is a 590-residue protein sequence, read N- to C-terminus: Protein phosphatase PP2A regulatory subunit A (590 aa).

11 HEAT repeats span residues 12–50, 89–127, 206–244, 246–284, 285–323, 324–362, 363–401, 402–440, 480–518, 519–551, and 562–590; these read PIAV…TRDE, LLSP…LEQY, FIPL…EIRH, LLQP…IKDE, LIKP…VLEE, IIPV…TTEY, LLPM…LSQS, LLPA…FNEK, IIPK…IEKQ, ILPT…VLAA, and IIPL…QTND.

The protein belongs to the phosphatase 2A regulatory subunit A family. As to quaternary structure, PP2A exists in several trimeric forms, all of which consist of a core composed of a catalytic subunit associated with a 65 kDa (PR65) (Subunit A) and a 55 kDa (PR55) (Subunit B) regulatory subunit.

Phosphatase 2A affects a variety of biological processes in the cell such as transcription, cell cycle progression and cellular morphogenesis, and provides an initial identification of critical substrates for this phosphatase. The regulatory subunit may direct the catalytic subunit to distinct, albeit overlapping, subsets of substrates. This chain is Protein phosphatase PP2A regulatory subunit A (paa1), found in Schizosaccharomyces pombe (strain 972 / ATCC 24843) (Fission yeast).